The sequence spans 554 residues: (E)-nerolidol synthase TPS18VF (554 aa).

R276, D313, D317, R455, and D458 together coordinate (2E,6E)-farnesyl diphosphate. Mg(2+) contacts are provided by D313 and D317. The DDXXD motif motif lies at 313 to 317 (DDIFD). 3 residues coordinate Mg(2+): D458, S462, and E466.

This sequence belongs to the terpene synthase family. Tpsb subfamily. Mg(2+) serves as cofactor. Mn(2+) is required as a cofactor. In terms of tissue distribution, highly expressed in glandular trichomes.

It catalyses the reaction (2E,6E)-farnesyl diphosphate + H2O = (6E)-nerolidol + diphosphate. The enzyme catalyses (2E)-geranyl diphosphate + H2O = (R)-linalool + diphosphate. It carries out the reaction (2E)-geranyl diphosphate + H2O = (S)-linalool + diphosphate. Its pathway is secondary metabolite biosynthesis; terpenoid biosynthesis. Functionally, involved in sesquiterpene olefins biosynthesis, constituants of cannabinoids and terpenoids-rich resins. Catalyzes primarily the conversion of (2E)-farnesyl diphosphate to (E)-nerolidol, and the conversion of (2E)-geranyl diphosphate to (+)linalool and (-)linalool. The protein is (E)-nerolidol synthase TPS18VF of Cannabis sativa (Hemp).